The chain runs to 85 residues: NAD(P)H-quinone oxidoreductase subunit O (85 aa).

The protein belongs to the complex I NdhO subunit family. As to quaternary structure, NDH-1 can be composed of about 15 different subunits; different subcomplexes with different compositions have been identified which probably have different functions.

Its subcellular location is the cellular thylakoid membrane. The enzyme catalyses a plastoquinone + NADH + (n+1) H(+)(in) = a plastoquinol + NAD(+) + n H(+)(out). It catalyses the reaction a plastoquinone + NADPH + (n+1) H(+)(in) = a plastoquinol + NADP(+) + n H(+)(out). In terms of biological role, NDH-1 shuttles electrons from an unknown electron donor, via FMN and iron-sulfur (Fe-S) centers, to quinones in the respiratory and/or the photosynthetic chain. The immediate electron acceptor for the enzyme in this species is believed to be plastoquinone. Couples the redox reaction to proton translocation, and thus conserves the redox energy in a proton gradient. Cyanobacterial NDH-1 also plays a role in inorganic carbon-concentration. This is NAD(P)H-quinone oxidoreductase subunit O from Synechococcus sp. (strain CC9311).